A 103-amino-acid polypeptide reads, in one-letter code: MSQFDNVSVVKKANLYFDGKCVSHTVTFADGTRKTLGVIFPAALTFNTGAPEIMEINAGVCRVRLAGSDEWKTYGAGQQFDVPGNSSFDIEVTETLDYVCHFG.

It belongs to the nucleoside phosphorylase PpnP family.

It catalyses the reaction a purine D-ribonucleoside + phosphate = a purine nucleobase + alpha-D-ribose 1-phosphate. The enzyme catalyses adenosine + phosphate = alpha-D-ribose 1-phosphate + adenine. The catalysed reaction is cytidine + phosphate = cytosine + alpha-D-ribose 1-phosphate. It carries out the reaction guanosine + phosphate = alpha-D-ribose 1-phosphate + guanine. It catalyses the reaction inosine + phosphate = alpha-D-ribose 1-phosphate + hypoxanthine. The enzyme catalyses thymidine + phosphate = 2-deoxy-alpha-D-ribose 1-phosphate + thymine. The catalysed reaction is uridine + phosphate = alpha-D-ribose 1-phosphate + uracil. It carries out the reaction xanthosine + phosphate = alpha-D-ribose 1-phosphate + xanthine. Its function is as follows. Catalyzes the phosphorolysis of diverse nucleosides, yielding D-ribose 1-phosphate and the respective free bases. Can use uridine, adenosine, guanosine, cytidine, thymidine, inosine and xanthosine as substrates. Also catalyzes the reverse reactions. The chain is Pyrimidine/purine nucleoside phosphorylase from Cupriavidus metallidurans (strain ATCC 43123 / DSM 2839 / NBRC 102507 / CH34) (Ralstonia metallidurans).